A 109-amino-acid chain; its full sequence is N-cym protein (109 aa).

As to quaternary structure, interacts with MYCN and GSK3B. As to expression, expressed in the neuronal cells of the cerebrum and cerebellum, spermatocytes of the testis, pancreatic cells and also the heart. Expressed in both primary and metastatic neuroblastomas and in thyroid tumors (at protein level). Expression is associated with poor prognosis in neuroblastoma. Expressed in the fetal brain, lung, liver and kidney at varying low levels.

The protein localises to the cytoplasm. It localises to the nucleus. Functionally, regulates stability of MYCN in neuroblastoma cells by inhibiting GSK3B-mediated MYCN phosphorylation. Inhibits GSK3B activity by promoting its phosphorylation at 'Ser-9'. The chain is N-cym protein (MYCNOS) from Homo sapiens (Human).